We begin with the raw amino-acid sequence, 167 residues long: Putative pre-16S rRNA nuclease (167 aa).

This sequence belongs to the YqgF nuclease family.

The protein resides in the cytoplasm. Functionally, could be a nuclease involved in processing of the 5'-end of pre-16S rRNA. The chain is Putative pre-16S rRNA nuclease from Streptomyces coelicolor (strain ATCC BAA-471 / A3(2) / M145).